A 542-amino-acid chain; its full sequence is Protein NODULATION SIGNALING PATHWAY 1 (542 aa).

The disordered stretch occupies residues 73-150 (TSTTSLEPCG…SNCNSGNSKE (78 aa)). Basic and acidic residues predominate over residues 92 to 103 (LPKKRNATDESS). Low complexity predominate over residues 136–148 (AKANGSNCNSGNS). The 388-residue stretch at 145-532 (SGNSKEGRWA…QPVSFCSLWK (388 aa)) folds into the GRAS domain. Positions 152 to 214 (RWAEQLLNPC…HLSSSSSSPT (63 aa)) are leucine repeat I (LRI). The segment at 233 to 332 (LLKFYEVSPW…GYNYYPRLLG (100 aa)) is VHIID. The VHIID motif lies at 269–273 (LHILD). Residues 333–357 (YAQSININLQINRIENHSLQTLNAQ) are leucine repeat II (LRII). A PFYRE region spans residues 367-452 (LIVCAQFRLH…RESDERRVME (86 aa)). The interval 455 to 532 (AAKALTNQRE…QPVSFCSLWK (78 aa)) is SAW.

The protein belongs to the GRAS family. In terms of tissue distribution, highly expressed in roots.

The protein localises to the nucleus. Its function is as follows. Transcriptional regulator essential for Nod-factor-induced gene expression. Acts downstream of calcium spiking and a calcium/calmodulin-dependent protein kinase required for activation of early nodulation gene expression. Acts as a common symbiosis gene that positively contributes to the early steps of the arbuscular mycorrhizal fungus and rhizobial infection processes in roots. Transcription factor involved in the positive regulation of the beta-carotene isomerase D27, which participates in a pathway leading to biosynthesis of strigolactones in roots. The protein is Protein NODULATION SIGNALING PATHWAY 1 of Lotus japonicus (Lotus corniculatus var. japonicus).